Here is a 602-residue protein sequence, read N- to C-terminus: Protein DGS1, mitochondrial (602 aa).

2 consecutive transmembrane segments (helical) span residues 300–320 and 465–485; these read LYWVRYTCGAVGLSVFSIWLL and INFAILAALPAFFLSIVMLTV.

Component of a mitochondrial large protein complex that contains, at least, MIC60, DGS1, TOM40 (e.g. TOM40-1), TOM20 proteins (e.g. TOM20-2), and petC/RISP.

Its subcellular location is the mitochondrion outer membrane. Its function is as follows. Involved in galactoglycerolipid biosynthesis. Contributes to an intracellular signal that regulates an alternative DGD1-independent galactoglycerolipid biosynthesis pathway in chloroplasts. Being involved in mitochondrial lipid homeostasis, modulates mitochondrion biogenesis and physiology, as well as stress responses. The polypeptide is Protein DGS1, mitochondrial (Arabidopsis thaliana (Mouse-ear cress)).